Reading from the N-terminus, the 141-residue chain is Large ribosomal subunit protein uL11 (141 aa).

The protein belongs to the universal ribosomal protein uL11 family. As to quaternary structure, part of the ribosomal stalk of the 50S ribosomal subunit. Interacts with L10 and the large rRNA to form the base of the stalk. L10 forms an elongated spine to which L12 dimers bind in a sequential fashion forming a multimeric L10(L12)X complex. Post-translationally, one or more lysine residues are methylated.

In terms of biological role, forms part of the ribosomal stalk which helps the ribosome interact with GTP-bound translation factors. This chain is Large ribosomal subunit protein uL11, found in Campylobacter lari (strain RM2100 / D67 / ATCC BAA-1060).